The chain runs to 129 residues: Succinate dehydrogenase assembly factor 3, mitochondrial (129 aa).

It belongs to the complex I LYR family. SDHAF3 subfamily. Interacts with the iron-sulfur protein subunit within the SDH catalytic dimer.

The protein resides in the mitochondrion matrix. Functionally, plays an essential role in the assembly of succinate dehydrogenase (SDH), an enzyme complex (also referred to as respiratory complex II) that is a component of both the tricarboxylic acid (TCA) cycle and the mitochondrial electron transport chain, and which couples the oxidation of succinate to fumarate with the reduction of ubiquinone (coenzyme Q) to ubiquinol. Promotes maturation of the iron-sulfur protein subunit of the SDH catalytic dimer, protecting it from the deleterious effects of oxidants. May act together with SDHAF1. The chain is Succinate dehydrogenase assembly factor 3, mitochondrial from Aspergillus fumigatus (strain ATCC MYA-4609 / CBS 101355 / FGSC A1100 / Af293) (Neosartorya fumigata).